The following is a 94-amino-acid chain: Co-chaperonin GroES (94 aa).

It belongs to the GroES chaperonin family. As to quaternary structure, heptamer of 7 subunits arranged in a ring. Interacts with the chaperonin GroEL.

The protein localises to the cytoplasm. Together with the chaperonin GroEL, plays an essential role in assisting protein folding. The GroEL-GroES system forms a nano-cage that allows encapsulation of the non-native substrate proteins and provides a physical environment optimized to promote and accelerate protein folding. GroES binds to the apical surface of the GroEL ring, thereby capping the opening of the GroEL channel. This chain is Co-chaperonin GroES, found in Bacillus pumilus (strain SAFR-032).